A 99-amino-acid chain; its full sequence is Small ribosomal subunit protein eS24 (99 aa).

This sequence belongs to the eukaryotic ribosomal protein eS24 family.

In Methanothrix thermoacetophila (strain DSM 6194 / JCM 14653 / NBRC 101360 / PT) (Methanosaeta thermophila), this protein is Small ribosomal subunit protein eS24.